Here is a 215-residue protein sequence, read N- to C-terminus: Urease accessory protein UreG 2 (215 aa).

Residue 11–18 (GPVGSGKT) coordinates GTP.

It belongs to the SIMIBI class G3E GTPase family. UreG subfamily. Homodimer. UreD, UreF and UreG form a complex that acts as a GTP-hydrolysis-dependent molecular chaperone, activating the urease apoprotein by helping to assemble the nickel containing metallocenter of UreC. The UreE protein probably delivers the nickel.

It is found in the cytoplasm. Facilitates the functional incorporation of the urease nickel metallocenter. This process requires GTP hydrolysis, probably effectuated by UreG. The protein is Urease accessory protein UreG 2 of Methylorubrum populi (strain ATCC BAA-705 / NCIMB 13946 / BJ001) (Methylobacterium populi).